Here is a 199-residue protein sequence, read N- to C-terminus: SCO2-like protein RBE_0029 (199 aa).

This sequence belongs to the SCO1/2 family.

The sequence is that of SCO2-like protein RBE_0029 from Rickettsia bellii (strain RML369-C).